The following is a 500-amino-acid chain: Glycogen synthase (500 aa).

Position 20 (Lys-20) interacts with ADP-alpha-D-glucose.

This sequence belongs to the glycosyltransferase 1 family. Bacterial/plant glycogen synthase subfamily.

The enzyme catalyses [(1-&gt;4)-alpha-D-glucosyl](n) + ADP-alpha-D-glucose = [(1-&gt;4)-alpha-D-glucosyl](n+1) + ADP + H(+). Its pathway is glycan biosynthesis; glycogen biosynthesis. Functionally, synthesizes alpha-1,4-glucan chains using ADP-glucose. In Desulforudis audaxviator (strain MP104C), this protein is Glycogen synthase.